Reading from the N-terminus, the 155-residue chain is 6,7-dimethyl-8-ribityllumazine synthase (155 aa).

5-amino-6-(D-ribitylamino)uracil is bound by residues F24, 58-60, and 82-84; these read AFE and AII. Residue 87–88 coordinates (2S)-2-hydroxy-3-oxobutyl phosphate; sequence ST. Residue H90 is the Proton donor of the active site. F115 is a 5-amino-6-(D-ribitylamino)uracil binding site. R129 contacts (2S)-2-hydroxy-3-oxobutyl phosphate.

It belongs to the DMRL synthase family.

It catalyses the reaction (2S)-2-hydroxy-3-oxobutyl phosphate + 5-amino-6-(D-ribitylamino)uracil = 6,7-dimethyl-8-(1-D-ribityl)lumazine + phosphate + 2 H2O + H(+). Its pathway is cofactor biosynthesis; riboflavin biosynthesis; riboflavin from 2-hydroxy-3-oxobutyl phosphate and 5-amino-6-(D-ribitylamino)uracil: step 1/2. Functionally, catalyzes the formation of 6,7-dimethyl-8-ribityllumazine by condensation of 5-amino-6-(D-ribitylamino)uracil with 3,4-dihydroxy-2-butanone 4-phosphate. This is the penultimate step in the biosynthesis of riboflavin. The sequence is that of 6,7-dimethyl-8-ribityllumazine synthase from Chlorobium phaeovibrioides (strain DSM 265 / 1930) (Prosthecochloris vibrioformis (strain DSM 265)).